A 146-amino-acid polypeptide reads, in one-letter code: Mite group 2 allergen Der f 2 (146 aa).

A signal peptide spans 1–17; it reads MISKILCLSLLVAAVVA. Cystine bridges form between cysteine 25–cysteine 136, cysteine 38–cysteine 44, and cysteine 90–cysteine 95.

The protein belongs to the NPC2 family.

The protein resides in the secreted. The chain is Mite group 2 allergen Der f 2 (DERF2) from Dermatophagoides farinae (American house dust mite).